Reading from the N-terminus, the 177-residue chain is Large ribosomal subunit protein uL6 (177 aa).

This sequence belongs to the universal ribosomal protein uL6 family. In terms of assembly, part of the 50S ribosomal subunit.

Its function is as follows. This protein binds to the 23S rRNA, and is important in its secondary structure. It is located near the subunit interface in the base of the L7/L12 stalk, and near the tRNA binding site of the peptidyltransferase center. In Cereibacter sphaeroides (strain ATCC 17025 / ATH 2.4.3) (Rhodobacter sphaeroides), this protein is Large ribosomal subunit protein uL6.